The primary structure comprises 410 residues: Tryptophan synthase beta chain (410 aa).

Lys-98 carries the post-translational modification N6-(pyridoxal phosphate)lysine.

The protein belongs to the TrpB family. As to quaternary structure, tetramer of two alpha and two beta chains. It depends on pyridoxal 5'-phosphate as a cofactor.

The catalysed reaction is (1S,2R)-1-C-(indol-3-yl)glycerol 3-phosphate + L-serine = D-glyceraldehyde 3-phosphate + L-tryptophan + H2O. It participates in amino-acid biosynthesis; L-tryptophan biosynthesis; L-tryptophan from chorismate: step 5/5. Its function is as follows. The beta subunit is responsible for the synthesis of L-tryptophan from indole and L-serine. The sequence is that of Tryptophan synthase beta chain from Roseobacter denitrificans (strain ATCC 33942 / OCh 114) (Erythrobacter sp. (strain OCh 114)).